The sequence spans 122 residues: Venom protein 7.1 (122 aa).

A signal peptide spans 1–19; sequence MRFSIISASLVLIFANVKA.

Contains 3 disulfide bonds. In terms of tissue distribution, expressed by the venom gland.

The protein localises to the secreted. This chain is Venom protein 7.1, found in Lychas mucronatus (Chinese swimming scorpion).